The chain runs to 178 residues: Ribosome maturation factor RimP (178 aa).

It belongs to the RimP family.

It localises to the cytoplasm. Its function is as follows. Required for maturation of 30S ribosomal subunits. In Streptococcus pyogenes serotype M3 (strain ATCC BAA-595 / MGAS315), this protein is Ribosome maturation factor RimP.